A 445-amino-acid polypeptide reads, in one-letter code: GTPase Der (445 aa).

2 EngA-type G domains span residues 3–167 (PVIA…YAGQ) and 180–353 (IKIA…AAAM). Residues 9–16 (GRPNVGKS), 56–60 (DTGGF), 119–122 (NKAE), 186–193 (GRPNVGKS), 233–237 (DTAGL), and 298–301 (NKWD) contribute to the GTP site. A KH-like domain is found at 354 to 438 (AKLPTPKLTR…PLRIEFRSSN (85 aa)).

This sequence belongs to the TRAFAC class TrmE-Era-EngA-EngB-Septin-like GTPase superfamily. EngA (Der) GTPase family. Associates with the 50S ribosomal subunit.

Functionally, GTPase that plays an essential role in the late steps of ribosome biogenesis. The polypeptide is GTPase Der (Burkholderia lata (strain ATCC 17760 / DSM 23089 / LMG 22485 / NCIMB 9086 / R18194 / 383)).